The sequence spans 702 residues: Neurochondrin (702 aa).

The protein belongs to the neurochondrin family.

Its subcellular location is the cytoplasm. The protein resides in the cytosol. The protein localises to the cell projection. It is found in the dendrite. It localises to the postsynapse. Its function is as follows. Probably involved in signal transduction, in the nervous system. Required for the spatial learning process. May also be involved in neurite outgrowth. The polypeptide is Neurochondrin (NCDN) (Gallus gallus (Chicken)).